A 195-amino-acid polypeptide reads, in one-letter code: Molybdenum cofactor guanylyltransferase (195 aa).

Residues 12-14 (LAG), Lys-25, Asn-53, Asp-70, and Asp-100 contribute to the GTP site. Asp-100 contributes to the Mg(2+) binding site.

This sequence belongs to the MobA family. As to quaternary structure, monomer. Mg(2+) serves as cofactor.

The protein localises to the cytoplasm. The enzyme catalyses Mo-molybdopterin + GTP + H(+) = Mo-molybdopterin guanine dinucleotide + diphosphate. Its function is as follows. Transfers a GMP moiety from GTP to Mo-molybdopterin (Mo-MPT) cofactor (Moco or molybdenum cofactor) to form Mo-molybdopterin guanine dinucleotide (Mo-MGD) cofactor. This is Molybdenum cofactor guanylyltransferase from Vibrio vulnificus (strain YJ016).